The following is a 396-amino-acid chain: Mannonate dehydratase (396 aa).

The protein belongs to the mannonate dehydratase family. The cofactor is Fe(2+). Mn(2+) serves as cofactor.

The catalysed reaction is D-mannonate = 2-dehydro-3-deoxy-D-gluconate + H2O. The protein operates within carbohydrate metabolism; pentose and glucuronate interconversion. In terms of biological role, catalyzes the dehydration of D-mannonate. This Serratia proteamaculans (strain 568) protein is Mannonate dehydratase.